A 397-amino-acid polypeptide reads, in one-letter code: Proteasome-activating nucleotidase (397 aa).

The stretch at 12–58 (GYEDYITFLKRRIRQLELQVRTLEADKERLERELSRLRTEMSRLRQP) forms a coiled coil. ATP contacts are provided by residues 182–187 (GCGKTL) and histidine 321. The interval 395 to 397 (MYG) is docks into pockets in the proteasome alpha-ring to cause gate opening.

The protein belongs to the AAA ATPase family. Homohexamer. The hexameric complex has a two-ring architecture resembling a top hat that caps the 20S proteasome core at one or both ends. Upon ATP-binding, the C-terminus of PAN interacts with the alpha-rings of the proteasome core by binding to the intersubunit pockets.

The protein resides in the cytoplasm. Its function is as follows. ATPase which is responsible for recognizing, binding, unfolding and translocation of substrate proteins into the archaeal 20S proteasome core particle. Is essential for opening the gate of the 20S proteasome via an interaction with its C-terminus, thereby allowing substrate entry and access to the site of proteolysis. Thus, the C-termini of the proteasomal ATPase function like a 'key in a lock' to induce gate opening and therefore regulate proteolysis. Unfolding activity requires energy from ATP hydrolysis, whereas ATP binding alone promotes ATPase-20S proteasome association which triggers gate opening, and supports translocation of unfolded substrates. The protein is Proteasome-activating nucleotidase of Thermococcus gammatolerans (strain DSM 15229 / JCM 11827 / EJ3).